The sequence spans 133 residues: MRMSLAQRVLLTWLFTLLFLIMLVLKLDEKAPWNWFLIFIPVWIFDTILLVLLIVKMAGRCKSGFDPRHGSHNIKKKAWYLIAMLLKLAFCLALCAKLEQFTTMNLSYVFIPLWALLAGALTELGYNVFFVRD.

A run of 4 helical transmembrane segments spans residues 5–25, 35–55, 78–98, and 110–130; these read LAQRVLLTWLFTLLFLIMLVL, WFLIFIPVWIFDTILLVLLIV, AWYLIAMLLKLAFCLALCAKL, and FIPLWALLAGALTELGYNVFF.

Its subcellular location is the membrane. This is Transmembrane protein 60 (TMEM60) from Homo sapiens (Human).